The following is a 439-amino-acid chain: uncharacterized protein (439 aa).

The N-terminal stretch at 1–22 is a signal peptide; that stretch reads MWVALKRFGFLSGLLALTVLSA. The N-palmitoyl cysteine moiety is linked to residue Cys-23. Cys-23 is lipidated: S-diacylglycerol cysteine.

The protein belongs to the MG067/MG068/MG395 family.

It is found in the cell membrane. This is an uncharacterized protein from Mycoplasma pneumoniae (strain ATCC 29342 / M129 / Subtype 1) (Mycoplasmoides pneumoniae).